The primary structure comprises 462 residues: Violaxanthin de-epoxidase, chloroplastic (462 aa).

A disulfide bridge connects residues Cys231 and Cys362. Residues 372–437 (IEKTVEEGER…RELSKEEMEF (66 aa)) are a coiled coil. The interval 380–391 (ERIIVKEVEEIE) is involved in the binding to the thylakoid membrane.

The protein belongs to the calycin superfamily. Lipocalin family. In terms of assembly, interacts in vitro with LTO1.

It is found in the plastid. The protein resides in the chloroplast thylakoid membrane. The enzyme catalyses all-trans-violaxanthin + 2 L-ascorbate = all-trans-zeaxanthin + 2 L-dehydroascorbate + 2 H2O. Activity limited by low ascorbate availability. Feedback inhibition by zeaxanthin. Requires the presence of micelle-forming lipids such as monogalactosyldiacylglyceride (MGDG). Low concentration of bilayer forming lipids, such as digalactosyldiacylglyceride (DGDG) or phosphatidylcholine, supports a slower but nearly complete activity. 80% of the specific activity in lumenal chloroplast fractions is lost in vitro in the presence of reduced thioredoxin. In terms of biological role, part of the xanthophyll (or violaxanthin) cycle for controlling the concentration of zeaxanthin in chloroplasts. Catalyzes the two-step mono de-epoxidation reaction. Stereospecific for all-trans xanthophylls. Zeaxanthin induces the dissipation of excitation energy in the chlorophyll of the light-harvesting protein complex of photosystem II. The protein is Violaxanthin de-epoxidase, chloroplastic of Arabidopsis thaliana (Mouse-ear cress).